We begin with the raw amino-acid sequence, 398 residues long: Putative glutamate--cysteine ligase 2 (398 aa).

It belongs to the glutamate--cysteine ligase type 2 family. YbdK subfamily.

It catalyses the reaction L-cysteine + L-glutamate + ATP = gamma-L-glutamyl-L-cysteine + ADP + phosphate + H(+). In terms of biological role, ATP-dependent carboxylate-amine ligase which exhibits weak glutamate--cysteine ligase activity. In Micrococcus luteus (strain ATCC 4698 / DSM 20030 / JCM 1464 / CCM 169 / CCUG 5858 / IAM 1056 / NBRC 3333 / NCIMB 9278 / NCTC 2665 / VKM Ac-2230) (Micrococcus lysodeikticus), this protein is Putative glutamate--cysteine ligase 2.